The primary structure comprises 407 residues: MKRAFIMVLDSFGIGATEDADRFGDVGSDTLGHIAEACAKGEADNGRKGPLNLPNLTRLGLVKAHEGSTGKIAAGMDGNADVIGAYAWAHELSSGKDTPSGHWEIAGVPVLFDWGYFSDHENSFPQELLDKLVKRANLPGYLGNCHSSGTVILDQLGEEHMKTGKPIFYTSADSVFQIACHEETFGLDKLYELCEIAREELTVGGYNIGRVIARPFIGDKAGNFQRTGNRHDLAVEPPAPTVLQKLVDEKQGHVVSVGKIADIYANCGITKKVKATGLDALFDATLKEMKEAGDKTIVFTNFVDFDSSWGHRRDIAGYAAGLELFDRRLPELMELVGEDDILILTADHGCDPSWTGTDHTREHIPVLIYGPKVKPGSLGHRETFADIGQTLATYFGTSPMDYGKNML.

Residues aspartate 10, aspartate 306, histidine 311, aspartate 347, histidine 348, and histidine 359 each contribute to the Mn(2+) site.

This sequence belongs to the phosphopentomutase family. Mn(2+) is required as a cofactor.

It localises to the cytoplasm. It catalyses the reaction 2-deoxy-alpha-D-ribose 1-phosphate = 2-deoxy-D-ribose 5-phosphate. It carries out the reaction alpha-D-ribose 1-phosphate = D-ribose 5-phosphate. The protein operates within carbohydrate degradation; 2-deoxy-D-ribose 1-phosphate degradation; D-glyceraldehyde 3-phosphate and acetaldehyde from 2-deoxy-alpha-D-ribose 1-phosphate: step 1/2. Functionally, isomerase that catalyzes the conversion of deoxy-ribose 1-phosphate (dRib-1-P) and ribose 1-phosphate (Rib-1-P) to deoxy-ribose 5-phosphate (dRib-5-P) and ribose 5-phosphate (Rib-5-P), respectively. In Salmonella dublin (strain CT_02021853), this protein is Phosphopentomutase.